Reading from the N-terminus, the 188-residue chain is Transcription antitermination protein NusB (188 aa).

Residues arginine 154–proline 188 form a disordered region. A compositionally biased stretch (acidic residues) spans aspartate 172–proline 188.

The protein belongs to the NusB family.

Involved in transcription antitermination. Required for transcription of ribosomal RNA (rRNA) genes. Binds specifically to the boxA antiterminator sequence of the ribosomal RNA (rrn) operons. In Corynebacterium efficiens (strain DSM 44549 / YS-314 / AJ 12310 / JCM 11189 / NBRC 100395), this protein is Transcription antitermination protein NusB.